Here is a 612-residue protein sequence, read N- to C-terminus: 1-deoxy-D-xylulose-5-phosphate synthase (612 aa).

Thiamine diphosphate is bound by residues histidine 77 and 118–120; that span reads GHS. Aspartate 147 is a Mg(2+) binding site. Residues 148–149, asparagine 176, tyrosine 288, and glutamate 365 contribute to the thiamine diphosphate site; that span reads AA. Asparagine 176 contacts Mg(2+).

The protein belongs to the transketolase family. DXPS subfamily. As to quaternary structure, homodimer. It depends on Mg(2+) as a cofactor. Requires thiamine diphosphate as cofactor.

The catalysed reaction is D-glyceraldehyde 3-phosphate + pyruvate + H(+) = 1-deoxy-D-xylulose 5-phosphate + CO2. The protein operates within metabolic intermediate biosynthesis; 1-deoxy-D-xylulose 5-phosphate biosynthesis; 1-deoxy-D-xylulose 5-phosphate from D-glyceraldehyde 3-phosphate and pyruvate: step 1/1. Its function is as follows. Catalyzes the acyloin condensation reaction between C atoms 2 and 3 of pyruvate and glyceraldehyde 3-phosphate to yield 1-deoxy-D-xylulose-5-phosphate (DXP). This chain is 1-deoxy-D-xylulose-5-phosphate synthase, found in Malacoplasma penetrans (strain HF-2) (Mycoplasma penetrans).